Consider the following 410-residue polypeptide: Polyadenylation and cleavage factor homolog 5 (410 aa).

Over residues 1 to 17 (MASNGSFSAQRNANAGT) the composition is skewed to polar residues. A disordered region spans residues 1 to 32 (MASNGSFSAQRNANAGTTMKRRNDNRGYGGGI). The stretch at 191-214 (SKELTDLLSLLNNEKEKKTSEASN) forms a coiled coil. Residues 247 to 269 (RQCTSCGVRFKCQEEHSKHMDWH) form a C2H2-type zinc finger.

Forms a complex with cleavage and polyadenylation specificity factor (CPSF) subunits CSTF77, CLPS3, PCFS4 and PCFS1.

It localises to the nucleus. The polypeptide is Polyadenylation and cleavage factor homolog 5 (Arabidopsis thaliana (Mouse-ear cress)).